A 258-amino-acid chain; its full sequence is Ubiquinone/menaquinone biosynthesis C-methyltransferase UbiE (258 aa).

The tract at residues 1–20 (MSESRTSADGGMETSYGFRE) is disordered. Residues Thr81, Asp102, and 130 to 131 (NA) each bind S-adenosyl-L-methionine.

It belongs to the class I-like SAM-binding methyltransferase superfamily. MenG/UbiE family.

The catalysed reaction is a 2-demethylmenaquinol + S-adenosyl-L-methionine = a menaquinol + S-adenosyl-L-homocysteine + H(+). The enzyme catalyses a 2-methoxy-6-(all-trans-polyprenyl)benzene-1,4-diol + S-adenosyl-L-methionine = a 5-methoxy-2-methyl-3-(all-trans-polyprenyl)benzene-1,4-diol + S-adenosyl-L-homocysteine + H(+). The protein operates within quinol/quinone metabolism; menaquinone biosynthesis; menaquinol from 1,4-dihydroxy-2-naphthoate: step 2/2. It participates in cofactor biosynthesis; ubiquinone biosynthesis. Its function is as follows. Methyltransferase required for the conversion of demethylmenaquinol (DMKH2) to menaquinol (MKH2) and the conversion of 2-polyprenyl-6-methoxy-1,4-benzoquinol (DDMQH2) to 2-polyprenyl-3-methyl-6-methoxy-1,4-benzoquinol (DMQH2). The polypeptide is Ubiquinone/menaquinone biosynthesis C-methyltransferase UbiE (Rhizobium etli (strain CIAT 652)).